The chain runs to 273 residues: Large ribosomal subunit protein uL2cz/uL2cy (273 aa).

2 disordered regions span residues 1-25 (MAIH…VKSN) and 224-273 (NPVD…RRRK).

This sequence belongs to the universal ribosomal protein uL2 family. In terms of assembly, part of the 50S ribosomal subunit.

It is found in the plastid. It localises to the chloroplast. This Phalaenopsis aphrodite subsp. formosana (Moth orchid) protein is Large ribosomal subunit protein uL2cz/uL2cy (rpl2-A).